The chain runs to 367 residues: UDP-N-acetylglucosamine--N-acetylmuramyl-(pentapeptide) pyrophosphoryl-undecaprenol N-acetylglucosamine transferase (367 aa).

UDP-N-acetyl-alpha-D-glucosamine is bound by residues 15–17 (TGG), Asn127, Arg163, Ser191, Ile249, and Gln294.

Belongs to the glycosyltransferase 28 family. MurG subfamily.

Its subcellular location is the cell inner membrane. It catalyses the reaction di-trans,octa-cis-undecaprenyl diphospho-N-acetyl-alpha-D-muramoyl-L-alanyl-D-glutamyl-meso-2,6-diaminopimeloyl-D-alanyl-D-alanine + UDP-N-acetyl-alpha-D-glucosamine = di-trans,octa-cis-undecaprenyl diphospho-[N-acetyl-alpha-D-glucosaminyl-(1-&gt;4)]-N-acetyl-alpha-D-muramoyl-L-alanyl-D-glutamyl-meso-2,6-diaminopimeloyl-D-alanyl-D-alanine + UDP + H(+). It participates in cell wall biogenesis; peptidoglycan biosynthesis. Its function is as follows. Cell wall formation. Catalyzes the transfer of a GlcNAc subunit on undecaprenyl-pyrophosphoryl-MurNAc-pentapeptide (lipid intermediate I) to form undecaprenyl-pyrophosphoryl-MurNAc-(pentapeptide)GlcNAc (lipid intermediate II). The sequence is that of UDP-N-acetylglucosamine--N-acetylmuramyl-(pentapeptide) pyrophosphoryl-undecaprenol N-acetylglucosamine transferase from Burkholderia pseudomallei (strain 1710b).